We begin with the raw amino-acid sequence, 94 residues long: Large ribosomal subunit protein bL25 (94 aa).

It belongs to the bacterial ribosomal protein bL25 family. In terms of assembly, part of the 50S ribosomal subunit; part of the 5S rRNA/L5/L18/L25 subcomplex. Contacts the 5S rRNA. Binds to the 5S rRNA independently of L5 and L18.

Its function is as follows. This is one of the proteins that binds to the 5S RNA in the ribosome where it forms part of the central protuberance. The chain is Large ribosomal subunit protein bL25 from Citrobacter koseri (strain ATCC BAA-895 / CDC 4225-83 / SGSC4696).